Here is a 480-residue protein sequence, read N- to C-terminus: Protein nucleotidyltransferase YdiU (480 aa).

8 residues coordinate ATP: glycine 86, glycine 88, arginine 89, lysine 109, aspartate 121, glycine 122, arginine 172, and arginine 179. The Proton acceptor role is filled by aspartate 248. 2 residues coordinate Mg(2+): asparagine 249 and aspartate 258. Aspartate 258 provides a ligand contact to ATP.

The protein belongs to the SELO family. The cofactor is Mg(2+). Mn(2+) serves as cofactor.

It catalyses the reaction L-seryl-[protein] + ATP = 3-O-(5'-adenylyl)-L-seryl-[protein] + diphosphate. It carries out the reaction L-threonyl-[protein] + ATP = 3-O-(5'-adenylyl)-L-threonyl-[protein] + diphosphate. The enzyme catalyses L-tyrosyl-[protein] + ATP = O-(5'-adenylyl)-L-tyrosyl-[protein] + diphosphate. The catalysed reaction is L-histidyl-[protein] + UTP = N(tele)-(5'-uridylyl)-L-histidyl-[protein] + diphosphate. It catalyses the reaction L-seryl-[protein] + UTP = O-(5'-uridylyl)-L-seryl-[protein] + diphosphate. It carries out the reaction L-tyrosyl-[protein] + UTP = O-(5'-uridylyl)-L-tyrosyl-[protein] + diphosphate. Nucleotidyltransferase involved in the post-translational modification of proteins. It can catalyze the addition of adenosine monophosphate (AMP) or uridine monophosphate (UMP) to a protein, resulting in modifications known as AMPylation and UMPylation. This chain is Protein nucleotidyltransferase YdiU, found in Salmonella newport (strain SL254).